The sequence spans 235 residues: Chalcone--flavanone isomerase 2 (235 aa).

The substrate site is built by T50 and S192.

This sequence belongs to the chalcone isomerase family.

The catalysed reaction is a chalcone = a flavanone.. It functions in the pathway secondary metabolite biosynthesis; flavonoid biosynthesis. In terms of biological role, catalyzes the intramolecular cyclization of bicyclic chalcones into tricyclic (S)-flavanones. Responsible for the isomerization of 4,2',4',6'-tetrahydroxychalcone (also termed chalcone) into naringenin. The protein is Chalcone--flavanone isomerase 2 (CHI2) of Chrysanthemum morifolium (Florist's daisy).